We begin with the raw amino-acid sequence, 394 residues long: Ceramide glucosyltransferase-A (394 aa).

Residues Met-1–Gly-10 lie on the Lumenal side of the membrane. A helical membrane pass occupies residues Leu-11–Tyr-32. At Thr-33–Arg-195 the chain is on the cytoplasmic side. Residue Asp-92 is a short sequence motif, D1. Position 144 (Asp-144) is a short sequence motif, D2. A helical membrane pass occupies residues Ser-196–Met-215. The Lumenal portion of the chain corresponds to Arg-216–Thr-287. Position 236 (Asp-236) is a short sequence motif, D3. The active-site Proton acceptor is Asp-236. Positions Arg-272–Trp-276 match the (Q/R)XXRW motif. Residues Ile-288–Gly-304 form a helical membrane-spanning segment. The Cytoplasmic portion of the chain corresponds to Trp-305–His-309. Residues Ile-310–Ile-328 form a helical membrane-spanning segment. The Lumenal segment spans residues Phe-329–Asp-348. Residues Tyr-349–Trp-369 form a helical membrane-spanning segment. At Asp-370–Val-394 the chain is on the cytoplasmic side.

The protein belongs to the glycosyltransferase 2 family. In terms of tissue distribution, at the late gastrula stage, weakly expressed ubiquitously. As neurulation proceeds (stages 15-16), expression moves towards the dorsal structures: involuted paraxial mesoderm and neural folds. In the tailbud embryo (stage 28), expression is restricted to the notochord. At later stages (stage 35), expression remains in the notochord and also appears weakly in the cephalic region.

The protein localises to the golgi apparatus membrane. The enzyme catalyses an N-acylsphing-4-enine + UDP-alpha-D-glucose = a beta-D-glucosyl-(1&lt;-&gt;1')-N-acylsphing-4-enine + UDP + H(+). It catalyses the reaction UDP-alpha-D-xylose + an N-acylsphing-4-enine = a beta-D-xylosyl-(1&lt;-&gt;1')-N-acylsphing-4-enine + UDP + H(+). The catalysed reaction is N-(9Z-octadecenoyl)-sphing-4-enine + UDP-alpha-D-xylose = beta-D-xylosyl-(1&lt;-&gt;1')-N-(9Z-octadecenoyl)-sphing-4-enine + UDP + H(+). Its pathway is lipid metabolism; sphingolipid metabolism. Its function is as follows. Participates in the initial step of the glucosylceramide-based glycosphingolipid/GSL synthetic pathway at the cytosolic surface of the Golgi. Catalyzes the transfer of glucose from UDP-glucose to ceramide to produce glucosylceramide/GlcCer (such as beta-D-glucosyl-(1&lt;-&gt;1')-N-acylsphing-4-enine). Glucosylceramide is the core component of glycosphingolipids/GSLs, amphipathic molecules consisting of a ceramide lipid moiety embedded in the outer leaflet of the membrane, linked to one of hundreds of different externally oriented oligosaccharide structures. Glycosphingolipids are essential components of membrane microdomains that mediate membrane trafficking and signal transduction. They are implicated in many fundamental cellular processes, including growth, differentiation, migration, morphogenesis, cell-to-cell and cell-to-matrix interactions. Glycosphingolipids are required for convergence extension movements during early development. Catalyzes the synthesis of xylosylceramide/XylCer (such as beta-D-xylosyl-(1&lt;-&gt;1')-N-acylsphing-4-enine) using UDP-Xyl as xylose donor. This Xenopus laevis (African clawed frog) protein is Ceramide glucosyltransferase-A (ugcg-a).